A 392-amino-acid polypeptide reads, in one-letter code: MENDKHNNPKTIFIPDDIAEGIFHHLPIKSLARFKVLSKKWTSMIESTYFSHKRLIRTGLPTPNMKFLHISQHFTANFVEEYSNSITFLLETFSRDDQNNRKTFDESQNKTIQVLGSCDGLVLLRIHDDFRSIYLINPTTKEHMKLSPEFMQWPFTLSYLTPAMANKPWRQLSQSVLDYDISVKRMPSLAGFGKDIVKKSYKVVLIYTRYEIHDHEFKAKVLSLDNGEQRDVGFYDIHHCIFCDEQTSVYANGSLFWLTLKKLSQTSYQLLAIDLHTEEFRWILLPECDTKYATNIEMWNLNERLCLSDVLESSNLVVWSLHQEYPTEKWEKIYSIKIDVIRTNQLHEKFWMLGLAAAYFSNIRNRQDQVSFFRQRTISYLPTMISPSNLML.

Residues 8-55 form the F-box domain; sequence NPKTIFIPDDIAEGIFHHLPIKSLARFKVLSKKWTSMIESTYFSHKRL.

This Arabidopsis thaliana (Mouse-ear cress) protein is Putative F-box protein At1g71320.